The primary structure comprises 381 residues: 1-deoxy-D-xylulose 5-phosphate reductoisomerase (381 aa).

7 residues coordinate NADPH: threonine 11, glycine 12, serine 13, isoleucine 14, lysine 36, asparagine 37, and asparagine 121. Lysine 122 serves as a coordination point for 1-deoxy-D-xylulose 5-phosphate. Glutamate 123 serves as a coordination point for NADPH. Aspartate 147 is a binding site for Mn(2+). 1-deoxy-D-xylulose 5-phosphate is bound by residues serine 148, glutamate 149, serine 173, and histidine 196. Glutamate 149 serves as a coordination point for Mn(2+). Glycine 202 provides a ligand contact to NADPH. Serine 209, asparagine 214, lysine 215, and glutamate 218 together coordinate 1-deoxy-D-xylulose 5-phosphate. Residue glutamate 218 coordinates Mn(2+).

The protein belongs to the DXR family. It depends on Mg(2+) as a cofactor. Mn(2+) is required as a cofactor.

The catalysed reaction is 2-C-methyl-D-erythritol 4-phosphate + NADP(+) = 1-deoxy-D-xylulose 5-phosphate + NADPH + H(+). Its pathway is isoprenoid biosynthesis; isopentenyl diphosphate biosynthesis via DXP pathway; isopentenyl diphosphate from 1-deoxy-D-xylulose 5-phosphate: step 1/6. Catalyzes the NADPH-dependent rearrangement and reduction of 1-deoxy-D-xylulose-5-phosphate (DXP) to 2-C-methyl-D-erythritol 4-phosphate (MEP). The sequence is that of 1-deoxy-D-xylulose 5-phosphate reductoisomerase from Acetivibrio thermocellus (strain ATCC 27405 / DSM 1237 / JCM 9322 / NBRC 103400 / NCIMB 10682 / NRRL B-4536 / VPI 7372) (Clostridium thermocellum).